Consider the following 569-residue polypeptide: Urease subunit alpha (569 aa).

Residues glycine 131–leucine 569 form the Urease domain. The Ni(2+) site is built by histidine 136, histidine 138, and lysine 219. Lysine 219 carries the post-translational modification N6-carboxylysine. Histidine 221 is a binding site for substrate. Residues histidine 248 and histidine 274 each coordinate Ni(2+). Residue histidine 322 is the Proton donor of the active site. Aspartate 362 is a Ni(2+) binding site.

It belongs to the metallo-dependent hydrolases superfamily. Urease alpha subunit family. Heterotrimer of UreA (gamma), UreB (beta) and UreC (alpha) subunits. Three heterotrimers associate to form the active enzyme. It depends on Ni cation as a cofactor. Carboxylation allows a single lysine to coordinate two nickel ions.

It is found in the cytoplasm. It carries out the reaction urea + 2 H2O + H(+) = hydrogencarbonate + 2 NH4(+). Its pathway is nitrogen metabolism; urea degradation; CO(2) and NH(3) from urea (urease route): step 1/1. The protein is Urease subunit alpha of Prochlorococcus marinus (strain NATL1A).